The sequence spans 912 residues: Coiled-coil domain-containing protein 162 (912 aa).

2 coiled-coil regions span residues 1 to 35 (MFKS…FSFA) and 220 to 276 (VLLG…VVMS).

This Mus musculus (Mouse) protein is Coiled-coil domain-containing protein 162.